We begin with the raw amino-acid sequence, 131 residues long: Classical arabinogalactan protein 1 (131 aa).

An N-terminal signal peptide occupies residues 1–22; it reads MAFSKSLVFVLLAALLISSAVA. The tract at residues 22 to 110 is disordered; sequence AQSPAPAPSN…APGPAQGGAV (89 aa). Over residues 50 to 60 the composition is skewed to pro residues; that stretch reads APAPEVSPSPS. Positions 61 to 72 are enriched in low complexity; the sequence is PAAALTPESSAS. A lipid anchor (GPI-anchor amidated glycine) is attached at Gly-108. Positions 109 to 131 are cleaved as a propeptide — removed in mature form; that stretch reads AVSNKFASFGSVAVMLTAAVLVI.

It belongs to the classical AGP family. O-glycosylated on the hydroxyproline residues. As to expression, predominantly expressed in flowers and at a lower level in roots and leaves.

It is found in the cell membrane. In terms of biological role, proteoglycan that seems to be implicated in diverse developmental roles such as differentiation, cell-cell recognition, embryogenesis and programmed cell death. The chain is Classical arabinogalactan protein 1 (AGP1) from Arabidopsis thaliana (Mouse-ear cress).